A 158-amino-acid chain; its full sequence is Ribosomal RNA large subunit methyltransferase H (158 aa).

Residues leucine 74, glycine 105, and 124-129 (LGPLTL) contribute to the S-adenosyl-L-methionine site.

The protein belongs to the RNA methyltransferase RlmH family. Homodimer.

It is found in the cytoplasm. It carries out the reaction pseudouridine(1915) in 23S rRNA + S-adenosyl-L-methionine = N(3)-methylpseudouridine(1915) in 23S rRNA + S-adenosyl-L-homocysteine + H(+). Specifically methylates the pseudouridine at position 1915 (m3Psi1915) in 23S rRNA. In Xylella fastidiosa (strain 9a5c), this protein is Ribosomal RNA large subunit methyltransferase H.